A 304-amino-acid polypeptide reads, in one-letter code: Aspartate carbamoyltransferase catalytic subunit (304 aa).

Residues R57 and T58 each contribute to the carbamoyl phosphate site. Residue K86 participates in L-aspartate binding. 3 residues coordinate carbamoyl phosphate: R107, H135, and Q138. R168 and R229 together coordinate L-aspartate. The carbamoyl phosphate site is built by L266 and P267.

This sequence belongs to the aspartate/ornithine carbamoyltransferase superfamily. ATCase family. In terms of assembly, heterooligomer of catalytic and regulatory chains.

It carries out the reaction carbamoyl phosphate + L-aspartate = N-carbamoyl-L-aspartate + phosphate + H(+). The protein operates within pyrimidine metabolism; UMP biosynthesis via de novo pathway; (S)-dihydroorotate from bicarbonate: step 2/3. Catalyzes the condensation of carbamoyl phosphate and aspartate to form carbamoyl aspartate and inorganic phosphate, the committed step in the de novo pyrimidine nucleotide biosynthesis pathway. The protein is Aspartate carbamoyltransferase catalytic subunit of Methanosphaera stadtmanae (strain ATCC 43021 / DSM 3091 / JCM 11832 / MCB-3).